We begin with the raw amino-acid sequence, 212 residues long: Probable dual specificity protein phosphatase DDB_G0269404 (212 aa).

One can recognise a Tyrosine-protein phosphatase domain in the interval 30 to 169 (FDAQEVIPNL…LINYEATILK (140 aa)). Cys113 acts as the Phosphocysteine intermediate in catalysis.

It belongs to the protein-tyrosine phosphatase family. Non-receptor class dual specificity subfamily.

It catalyses the reaction O-phospho-L-tyrosyl-[protein] + H2O = L-tyrosyl-[protein] + phosphate. It carries out the reaction O-phospho-L-seryl-[protein] + H2O = L-seryl-[protein] + phosphate. The catalysed reaction is O-phospho-L-threonyl-[protein] + H2O = L-threonyl-[protein] + phosphate. Functionally, has a dual specificity toward Ser/Thr and Tyr-containing proteins. This Dictyostelium discoideum (Social amoeba) protein is Probable dual specificity protein phosphatase DDB_G0269404.